The sequence spans 258 residues: Type III pantothenate kinase (258 aa).

6 to 13 (DVGNTNIV) provides a ligand contact to ATP. Substrate is bound by residues Tyr-100 and 107–110 (GADR). The Proton acceptor role is filled by Asp-109. A K(+)-binding site is contributed by Asp-129. Residue Thr-132 coordinates ATP. Thr-184 contacts substrate.

It belongs to the type III pantothenate kinase family. In terms of assembly, homodimer. NH4(+) is required as a cofactor. It depends on K(+) as a cofactor.

Its subcellular location is the cytoplasm. The catalysed reaction is (R)-pantothenate + ATP = (R)-4'-phosphopantothenate + ADP + H(+). It functions in the pathway cofactor biosynthesis; coenzyme A biosynthesis; CoA from (R)-pantothenate: step 1/5. Catalyzes the phosphorylation of pantothenate (Pan), the first step in CoA biosynthesis. This Clostridium botulinum (strain Kyoto / Type A2) protein is Type III pantothenate kinase.